Consider the following 301-residue polypeptide: 33 kDa chaperonin (301 aa).

2 cysteine pairs are disulfide-bonded: Cys239–Cys241 and Cys272–Cys275.

This sequence belongs to the HSP33 family. Post-translationally, under oxidizing conditions two disulfide bonds are formed involving the reactive cysteines. Under reducing conditions zinc is bound to the reactive cysteines and the protein is inactive.

The protein localises to the cytoplasm. Redox regulated molecular chaperone. Protects both thermally unfolding and oxidatively damaged proteins from irreversible aggregation. Plays an important role in the bacterial defense system toward oxidative stress. The protein is 33 kDa chaperonin of Nostoc sp. (strain PCC 7120 / SAG 25.82 / UTEX 2576).